Consider the following 312-residue polypeptide: Olfactory receptor 2C1 (312 aa).

The Extracellular portion of the chain corresponds to 1–24 (MEVDSNSSSGSFILMGVSDHPHLE). Residue Asn6 is glycosylated (N-linked (GlcNAc...) asparagine). Residues 25–48 (IIFFAVILASYLLTLVGNLTIILL) traverse the membrane as a helical segment. The Cytoplasmic segment spans residues 49-57 (SRLDARLHT). The helical transmembrane segment at 58 to 79 (PMYFFLSNLSSLDLAFTTSSVP) threads the bilayer. Residues 80-100 (QMLKNLWGPDKTISYGGCVTQ) are Extracellular-facing. Cys97 and Cys189 are joined by a disulfide. A helical membrane pass occupies residues 101–120 (LYVFLWLGATECILLVVMAF). Residues 121 to 139 (DRYVAVCRPLHYMTVMNPR) are Cytoplasmic-facing. Residues 140–160 (LCWGLAAISWLGGLGNSVIQS) form a helical membrane-spanning segment. At 161–200 (TFTLQLPFCGHRKVDNFLCEVPAMIKLACGDTSLNEAVLN) the chain is on the extracellular side. A helical transmembrane segment spans residues 201-222 (GVCTFFTVVPVSVILVSYCFIA). At 223 to 236 (QAVMKIRSVEGRRK) the chain is on the cytoplasmic side. A helical transmembrane segment spans residues 237–261 (AFNTCVSHLVVVFLFYGSAIYGYLL). At 262–272 (PAKSSNQSQGK) the chain is on the extracellular side. A helical membrane pass occupies residues 273–292 (FISLFYSVVTPMVNPLIYTL). Residues 293–312 (RNKEVKGALGRLLGKGRGAS) lie on the Cytoplasmic side of the membrane.

Belongs to the G-protein coupled receptor 1 family. Olfactory epithelium. Present in various subcellular compartments of the olfactory sensory neurons, particularly in the axonal processes and neve terminals.

The protein resides in the cell membrane. Functionally, olfactory receptor that is activated by the binding of organosulfur odorants with thioether groups such as (methylthio)methanetiol (MTMT). Also binds odorants acetophenone and benzaldehyde. The activity of this receptor is mediated by G proteins which activate adenylyl cyclase. May be involved in the molecular processes underlying fasciculation and targeting of olfactory axons. This chain is Olfactory receptor 2C1, found in Mus musculus (Mouse).